Consider the following 141-residue polypeptide: MAKKIVAVIKLALQAGKANPAPPVGPALGQHGVNIMAFCKEYNARTQDKAGFVIPVEISVFEDRSFTFITKTPPASVLITKAAGIEKGSGESSKGSVGNISKSQLEEIAKTKLPDLNCTSIESAMKVIEGTARNMGISITE.

It belongs to the universal ribosomal protein uL11 family. In terms of assembly, part of the ribosomal stalk of the 50S ribosomal subunit. Interacts with L10 and the large rRNA to form the base of the stalk. L10 forms an elongated spine to which L12 dimers bind in a sequential fashion forming a multimeric L10(L12)X complex. Post-translationally, one or more lysine residues are methylated.

Functionally, forms part of the ribosomal stalk which helps the ribosome interact with GTP-bound translation factors. This chain is Large ribosomal subunit protein uL11, found in Prochlorococcus marinus (strain MIT 9515).